A 219-amino-acid chain; its full sequence is ATP synthase delta chain, chloroplastic (219 aa).

A chloroplast-targeting transit peptide spans methionine 1–alanine 33.

It belongs to the ATPase delta chain family. In terms of assembly, F-type ATPases have 2 components, F(1) - the catalytic core - and F(0) - the membrane proton channel. F(1) has five subunits: alpha(3), beta(3), gamma(1), delta(1), epsilon(1). F(0) has four main subunits: a(1), b(1), b'(1) and c(10-14). The alpha and beta chains form an alternating ring which encloses part of the gamma chain. F(1) is attached to F(0) by a central stalk formed by the gamma and epsilon chains, while a peripheral stalk is formed by the delta, b and b' chains.

It is found in the plastid. The protein localises to the chloroplast thylakoid membrane. Functionally, f(1)F(0) ATP synthase produces ATP from ADP in the presence of a proton or sodium gradient. F-type ATPases consist of two structural domains, F(1) containing the extramembraneous catalytic core and F(0) containing the membrane proton channel, linked together by a central stalk and a peripheral stalk. During catalysis, ATP synthesis in the catalytic domain of F(1) is coupled via a rotary mechanism of the central stalk subunits to proton translocation. This protein seems to be part of the stalk that links CF(0) to CF(1). It either transmits conformational changes from CF(0) into CF(1) or is implicated in proton conduction. The sequence is that of ATP synthase delta chain, chloroplastic from Chlamydomonas reinhardtii (Chlamydomonas smithii).